A 288-amino-acid polypeptide reads, in one-letter code: MKKIAIFGSRHKSEQGASIKALILKLEEAGTPLYIERKFLSFLKQDLDFHPAICGVIDTLPEHIDYVICMGGDGTFLRTAHQIGVSQIPVLGVNTGRLGFLTDVDCHEASELITRLLDGDFTIETRSLLEVTEDNGSSPSYALNEAAILKRETGSMIRVNACLNDDYLAAYDADGLVVATPSGSTAYSLSGNGPIIMPACRNFVLTPIAPHSLNMRPLVVPDDTVIRLEVDSRSRNYLLVLDGRTRTLPCDTSILLKRAPHTLRMIRLRPHSFAETLRRKLMWGAAVR.

Aspartate 73 serves as the catalytic Proton acceptor. NAD(+) is bound by residues aspartate 73–glycine 74, arginine 78, asparagine 144–glutamate 145, aspartate 174, threonine 185–serine 190, and alanine 209.

Belongs to the NAD kinase family. Requires a divalent metal cation as cofactor.

The protein localises to the cytoplasm. It catalyses the reaction NAD(+) + ATP = ADP + NADP(+) + H(+). In terms of biological role, involved in the regulation of the intracellular balance of NAD and NADP, and is a key enzyme in the biosynthesis of NADP. Catalyzes specifically the phosphorylation on 2'-hydroxyl of the adenosine moiety of NAD to yield NADP. This chain is NAD kinase, found in Porphyromonas gingivalis (strain ATCC BAA-308 / W83).